The sequence spans 28 residues: 14-3-3-like protein 4 (28 aa).

This sequence belongs to the 14-3-3 family.

The polypeptide is 14-3-3-like protein 4 (Pseudotsuga menziesii (Douglas-fir)).